Reading from the N-terminus, the 357-residue chain is Hydroxyproline O-arabinosyltransferase RDN1 (357 aa).

A helical; Signal-anchor transmembrane segment spans residues 13-33; that stretch reads LLMLLMVLGFSFATYNLVFMM.

Expressed in the vasculature of leaves, petioles, stems and roots. Expressed in the vascular cylinder throughout the root, and nodule vasculature.

Its subcellular location is the golgi apparatus membrane. It catalyses the reaction trans-4-hydroxy-L-prolyl-[protein] + UDP-beta-L-arabinofuranose = O-(beta-L-arabinofuranosyl)-trans-4-hydroxy-L-prolyl-[protein] + UDP + H(+). In terms of biological role, probable glycosyltransferase involved in the O-arabinosylation of several proteins including extensins and small signaling peptides. Catalyzes the transfer of the initial L-arabinose to the hydroxyl group of Hyp residues. Probably involved in the arabinosylation of CLE12, a signaling peptide that moves from root to shoot, to interact with SUNN receptor kinase signaling that regulates nodulation. Involved in long distance nodulation signaling events. Involved in the autoregulation of nodulation (AON), a long distance systemic signaling from root to shoot and back again, which allows legumes to limit the number of root nodules formed based on available nitrogen and previous rhizobial colonization. Functions in the root, upstream of the shoot receptor kinase SUNN and via CLE peptide, to control AON. The sequence is that of Hydroxyproline O-arabinosyltransferase RDN1 from Medicago truncatula (Barrel medic).